A 336-amino-acid polypeptide reads, in one-letter code: tRNA(Ile)-lysidine synthase (336 aa).

32 to 37 (SGGQDS) is a binding site for ATP.

It belongs to the tRNA(Ile)-lysidine synthase family.

The protein localises to the cytoplasm. It carries out the reaction cytidine(34) in tRNA(Ile2) + L-lysine + ATP = lysidine(34) in tRNA(Ile2) + AMP + diphosphate + H(+). Functionally, ligates lysine onto the cytidine present at position 34 of the AUA codon-specific tRNA(Ile) that contains the anticodon CAU, in an ATP-dependent manner. Cytidine is converted to lysidine, thus changing the amino acid specificity of the tRNA from methionine to isoleucine. This is tRNA(Ile)-lysidine synthase from Synechococcus sp. (strain JA-3-3Ab) (Cyanobacteria bacterium Yellowstone A-Prime).